A 358-amino-acid chain; its full sequence is Cholesterol galactosyltransferase (358 aa).

Belongs to the glycosyltransferase 2 family.

The catalysed reaction is cholesterol + UDP-alpha-D-galactose = cholesteryl 3-beta-D-galactoside + UDP + H(+). The protein operates within glycolipid biosynthesis. Functionally, galactosyltransferase involved in the synthesis of cholesterol glycolipids, which are formed by the use of host-derived cholesterol and have been shown to be immunogenic, and possibly contribute to Lyme disease pathogenesis. Catalyzes the formation of cholesteryl beta-D-galactopyranoside (CGal) from cholesterol and UDP-alpha-D-galactose. Cannot use GDP-mannose. The protein is Cholesterol galactosyltransferase of Borreliella burgdorferi (strain ATCC 35210 / DSM 4680 / CIP 102532 / B31) (Borrelia burgdorferi).